Here is a 503-residue protein sequence, read N- to C-terminus: Probable cytosol aminopeptidase (503 aa).

Positions 270 and 275 each coordinate Mn(2+). Lysine 282 is a catalytic residue. Mn(2+) contacts are provided by aspartate 293, aspartate 352, and glutamate 354. Arginine 356 is a catalytic residue.

Belongs to the peptidase M17 family. It depends on Mn(2+) as a cofactor.

The protein localises to the cytoplasm. It catalyses the reaction Release of an N-terminal amino acid, Xaa-|-Yaa-, in which Xaa is preferably Leu, but may be other amino acids including Pro although not Arg or Lys, and Yaa may be Pro. Amino acid amides and methyl esters are also readily hydrolyzed, but rates on arylamides are exceedingly low.. The enzyme catalyses Release of an N-terminal amino acid, preferentially leucine, but not glutamic or aspartic acids.. Functionally, presumably involved in the processing and regular turnover of intracellular proteins. Catalyzes the removal of unsubstituted N-terminal amino acids from various peptides. The chain is Probable cytosol aminopeptidase from Yersinia pseudotuberculosis serotype O:1b (strain IP 31758).